The sequence spans 416 residues: 3-isopropylmalate dehydratase large subunit (416 aa).

3 residues coordinate [4Fe-4S] cluster: Cys299, Cys357, and Cys360.

The protein belongs to the aconitase/IPM isomerase family. LeuC type 2 subfamily. In terms of assembly, heterodimer of LeuC and LeuD. [4Fe-4S] cluster is required as a cofactor.

It catalyses the reaction (2R,3S)-3-isopropylmalate = (2S)-2-isopropylmalate. The protein operates within amino-acid biosynthesis; L-leucine biosynthesis; L-leucine from 3-methyl-2-oxobutanoate: step 2/4. Its function is as follows. Catalyzes the isomerization between 2-isopropylmalate and 3-isopropylmalate, via the formation of 2-isopropylmaleate. The protein is 3-isopropylmalate dehydratase large subunit of Saccharolobus solfataricus (strain ATCC 35092 / DSM 1617 / JCM 11322 / P2) (Sulfolobus solfataricus).